The sequence spans 120 residues: NAD(P)H-quinone oxidoreductase subunit 3, chloroplastic (120 aa).

The next 3 helical transmembrane spans lie at 9-29, 64-84, and 88-108; these read IFWA…LISG, MFAL…PWAM, and VLGV…ILGL.

This sequence belongs to the complex I subunit 3 family. As to quaternary structure, NDH is composed of at least 16 different subunits, 5 of which are encoded in the nucleus.

It localises to the plastid. The protein resides in the chloroplast thylakoid membrane. It carries out the reaction a plastoquinone + NADH + (n+1) H(+)(in) = a plastoquinol + NAD(+) + n H(+)(out). The catalysed reaction is a plastoquinone + NADPH + (n+1) H(+)(in) = a plastoquinol + NADP(+) + n H(+)(out). Functionally, NDH shuttles electrons from NAD(P)H:plastoquinone, via FMN and iron-sulfur (Fe-S) centers, to quinones in the photosynthetic chain and possibly in a chloroplast respiratory chain. The immediate electron acceptor for the enzyme in this species is believed to be plastoquinone. Couples the redox reaction to proton translocation, and thus conserves the redox energy in a proton gradient. The polypeptide is NAD(P)H-quinone oxidoreductase subunit 3, chloroplastic (Aethionema grandiflorum (Persian stone-cress)).